Consider the following 500-residue polypeptide: Nucleolar and spindle-associated protein 1 (500 aa).

Disordered regions lie at residues 48-204 (KNET…NFKK), 241-299 (TKKS…ASKS), 319-353 (VRFS…PESE), and 365-500 (ELLP…VPVK). Basic residues predominate over residues 82–92 (THRRGRGRKPI). Polar residues predominate over residues 113–127 (NMASSIDRTQQQNCT). Positions 264–274 (SRLSLLSPLPR) are enriched in low complexity. Polar residues predominate over residues 276-298 (TGASPSRTPMSQRRSCRSSTASK). The span at 323–332 (EATKDNEHKR) shows a compositional bias: basic and acidic residues. The segment covering 380–392 (ITLNTTTQPSPAT) has biased composition (polar residues). A compositionally biased stretch (basic and acidic residues) spans 442–451 (PWGESKENKP). The span at 452–469 (DPNSNVSVLKNNYKQPHL) shows a compositional bias: polar residues.

Belongs to the NUSAP family. Interacts with DNA, microtubules, ipo7, kpna2 and kpnb1. Microtubule stabilization is inhibited by ipo7 and kpna2, while microtubule bundling is inhibited by kpnb1. Active GTP-bound ran causes dissociation of ipo7 and kpnb1.

It is found in the cytoplasm. The protein resides in the nucleus. The protein localises to the cytoskeleton. Its subcellular location is the spindle. In terms of biological role, microtubule-associated protein with the capacity to bundle and stabilize microtubules. May associate with chromosomes and promote the organization of meiotic or mitotic spindle microtubules around them. This is Nucleolar and spindle-associated protein 1 (nusap1) from Xenopus tropicalis (Western clawed frog).